We begin with the raw amino-acid sequence, 205 residues long: Large ribosomal subunit protein uL4 (205 aa).

Residues 53-77 (RAAVRGGGRKPWKQKGTGRARAGSI) form a disordered region. Over residues 59–70 (GGRKPWKQKGTG) the composition is skewed to basic residues.

This sequence belongs to the universal ribosomal protein uL4 family. In terms of assembly, part of the 50S ribosomal subunit.

Its function is as follows. One of the primary rRNA binding proteins, this protein initially binds near the 5'-end of the 23S rRNA. It is important during the early stages of 50S assembly. It makes multiple contacts with different domains of the 23S rRNA in the assembled 50S subunit and ribosome. Forms part of the polypeptide exit tunnel. The protein is Large ribosomal subunit protein uL4 of Acidithiobacillus ferrooxidans (strain ATCC 23270 / DSM 14882 / CIP 104768 / NCIMB 8455) (Ferrobacillus ferrooxidans (strain ATCC 23270)).